A 353-amino-acid polypeptide reads, in one-letter code: Probable dual-specificity RNA methyltransferase RlmN (353 aa).

Glu-95 (proton acceptor) is an active-site residue. The Radical SAM core domain occupies 103-333; sequence DGGRKTICIS…PILNRRSPGR (231 aa). A disulfide bridge links Cys-110 with Cys-339. The [4Fe-4S] cluster site is built by Cys-117, Cys-121, and Cys-124. S-adenosyl-L-methionine contacts are provided by residues 164-165, Ser-196, 219-221, and Asn-296; these read GE and SLN. Residue Cys-339 is the S-methylcysteine intermediate of the active site.

This sequence belongs to the radical SAM superfamily. RlmN family. [4Fe-4S] cluster serves as cofactor.

Its subcellular location is the cytoplasm. It catalyses the reaction adenosine(2503) in 23S rRNA + 2 reduced [2Fe-2S]-[ferredoxin] + 2 S-adenosyl-L-methionine = 2-methyladenosine(2503) in 23S rRNA + 5'-deoxyadenosine + L-methionine + 2 oxidized [2Fe-2S]-[ferredoxin] + S-adenosyl-L-homocysteine. The catalysed reaction is adenosine(37) in tRNA + 2 reduced [2Fe-2S]-[ferredoxin] + 2 S-adenosyl-L-methionine = 2-methyladenosine(37) in tRNA + 5'-deoxyadenosine + L-methionine + 2 oxidized [2Fe-2S]-[ferredoxin] + S-adenosyl-L-homocysteine. Its function is as follows. Specifically methylates position 2 of adenine 2503 in 23S rRNA and position 2 of adenine 37 in tRNAs. The chain is Probable dual-specificity RNA methyltransferase RlmN from Leptospira biflexa serovar Patoc (strain Patoc 1 / Ames).